The primary structure comprises 309 residues: HPr kinase/phosphorylase (309 aa).

Catalysis depends on residues H138 and K159. An ATP-binding site is contributed by 153–160 (GQSGVGKS). S160 contacts Mg(2+). Catalysis depends on D177, which acts as the Proton acceptor; for phosphorylation activity. Proton donor; for dephosphorylation activity. The segment at 201-210 (LEIRGLGIIN) is important for the catalytic mechanism of both phosphorylation and dephosphorylation. E202 lines the Mg(2+) pocket. R243 is an active-site residue. Positions 264–269 (PVRPGR) are important for the catalytic mechanism of dephosphorylation.

It belongs to the HPrK/P family. As to quaternary structure, homohexamer. The cofactor is Mg(2+).

It carries out the reaction [HPr protein]-L-serine + ATP = [HPr protein]-O-phospho-L-serine + ADP + H(+). It catalyses the reaction [HPr protein]-O-phospho-L-serine + phosphate + H(+) = [HPr protein]-L-serine + diphosphate. Functionally, catalyzes the ATP- as well as the pyrophosphate-dependent phosphorylation of a specific serine residue in HPr, a phosphocarrier protein of the phosphoenolpyruvate-dependent sugar phosphotransferase system (PTS). HprK/P also catalyzes the pyrophosphate-producing, inorganic phosphate-dependent dephosphorylation (phosphorolysis) of seryl-phosphorylated HPr (P-Ser-HPr). The two antagonistic activities of HprK/P are regulated by several intracellular metabolites, which change their concentration in response to the absence or presence of rapidly metabolisable carbon sources (glucose, fructose, etc.) in the growth medium. Also phosphorylates/dephosphorylates the HPr-like catabolite repression protein crh on a specific serine residue. Therefore, by controlling the phosphorylation state of HPr and crh, HPrK/P is a sensor enzyme that plays a major role in the regulation of carbon metabolism and sugar transport: it mediates carbon catabolite repression (CCR), and regulates PTS-catalyzed carbohydrate uptake and inducer exclusion. The polypeptide is HPr kinase/phosphorylase (Bacillus cereus (strain B4264)).